A 311-amino-acid polypeptide reads, in one-letter code: Aspartate carbamoyltransferase catalytic subunit (311 aa).

Residues R55 and T56 each contribute to the carbamoyl phosphate site. Residue K83 coordinates L-aspartate. Residues R105, H134, and Q137 each coordinate carbamoyl phosphate. L-aspartate contacts are provided by R167 and R226. Carbamoyl phosphate is bound by residues G267 and P268.

Belongs to the aspartate/ornithine carbamoyltransferase superfamily. ATCase family. As to quaternary structure, heterododecamer (2C3:3R2) of six catalytic PyrB chains organized as two trimers (C3), and six regulatory PyrI chains organized as three dimers (R2).

It catalyses the reaction carbamoyl phosphate + L-aspartate = N-carbamoyl-L-aspartate + phosphate + H(+). It participates in pyrimidine metabolism; UMP biosynthesis via de novo pathway; (S)-dihydroorotate from bicarbonate: step 2/3. Its function is as follows. Catalyzes the condensation of carbamoyl phosphate and aspartate to form carbamoyl aspartate and inorganic phosphate, the committed step in the de novo pyrimidine nucleotide biosynthesis pathway. This chain is Aspartate carbamoyltransferase catalytic subunit, found in Corynebacterium jeikeium (strain K411).